Here is a 547-residue protein sequence, read N- to C-terminus: CTP synthase (547 aa).

Positions 1 to 265 are amidoligase domain; that stretch reads MARFVFITGG…DQAVLDAFSI (265 aa). Residue serine 13 participates in CTP binding. Serine 13 contacts UTP. Residues 14 to 19 and aspartate 71 each bind ATP; that span reads SLGKGL. Positions 71 and 139 each coordinate Mg(2+). CTP is bound by residues 146–148, 186–191, and lysine 222; these read DIE and KTKPTQ. UTP is bound by residues 186–191 and lysine 222; that span reads KTKPTQ. Residues 291–546 form the Glutamine amidotransferase type-1 domain; that stretch reads NVAIVGKYTQ…VRAAKEVSRL (256 aa). An L-glutamine-binding site is contributed by glycine 353. The Nucleophile; for glutamine hydrolysis role is filled by cysteine 380. L-glutamine is bound by residues 381–384, glutamate 404, and arginine 474; that span reads LGMQ. Residues histidine 519 and glutamate 521 contribute to the active site.

The protein belongs to the CTP synthase family. Homotetramer.

It catalyses the reaction UTP + L-glutamine + ATP + H2O = CTP + L-glutamate + ADP + phosphate + 2 H(+). The catalysed reaction is L-glutamine + H2O = L-glutamate + NH4(+). The enzyme catalyses UTP + NH4(+) + ATP = CTP + ADP + phosphate + 2 H(+). It functions in the pathway pyrimidine metabolism; CTP biosynthesis via de novo pathway; CTP from UDP: step 2/2. With respect to regulation, allosterically activated by GTP, when glutamine is the substrate; GTP has no effect on the reaction when ammonia is the substrate. The allosteric effector GTP functions by stabilizing the protein conformation that binds the tetrahedral intermediate(s) formed during glutamine hydrolysis. Inhibited by the product CTP, via allosteric rather than competitive inhibition. In terms of biological role, catalyzes the ATP-dependent amination of UTP to CTP with either L-glutamine or ammonia as the source of nitrogen. Regulates intracellular CTP levels through interactions with the four ribonucleotide triphosphates. This chain is CTP synthase, found in Dinoroseobacter shibae (strain DSM 16493 / NCIMB 14021 / DFL 12).